Reading from the N-terminus, the 556-residue chain is Arginine--tRNA ligase (556 aa).

The 'HIGH' region motif lies at 134-144 (ANPTGPLHIGH).

Belongs to the class-I aminoacyl-tRNA synthetase family. As to quaternary structure, monomer.

The protein localises to the cytoplasm. The enzyme catalyses tRNA(Arg) + L-arginine + ATP = L-arginyl-tRNA(Arg) + AMP + diphosphate. This Micrococcus luteus (strain ATCC 4698 / DSM 20030 / JCM 1464 / CCM 169 / CCUG 5858 / IAM 1056 / NBRC 3333 / NCIMB 9278 / NCTC 2665 / VKM Ac-2230) (Micrococcus lysodeikticus) protein is Arginine--tRNA ligase.